A 791-amino-acid polypeptide reads, in one-letter code: Probable potassium transporter 11 (791 aa).

Over 1-49 (MASLSESEGTNRGSMWELDQNLDQPMDEEASRLKNMYREKKFSSLLLLR) the chain is Cytoplasmic. The chain crosses the membrane as a helical span at residues 50–70 (LAFQSLGVVFGDLGTSPLYVF). The Extracellular portion of the chain corresponds to 71–87 (YNAFPHGVDDEEDVIGA). A helical transmembrane segment spans residues 88-108 (LSLIIYTLTLIPLLKYVFVVL). Over 109 to 175 (RANDNGQGGT…EAHAYKRNCL (67 aa)) the chain is Cytoplasmic. Residues 176 to 196 (LIVVLIGTCTAIGDGILTPAI) traverse the membrane as a helical segment. Residues 197–215 (SVLSASGGIKVQNPNMSTD) lie on the Extracellular side of the membrane. Residue asparagine 211 is glycosylated (N-linked (GlcNAc...) asparagine). A helical membrane pass occupies residues 216 to 236 (VVVIVSVIILIGLFSMQHYGT). At 237-238 (DK) the chain is on the cytoplasmic side. A helical transmembrane segment spans residues 239-259 (VGWLFAPIVLLWFILIGSVGA). Topologically, residues 260-289 (LNIHKYKGSVLKAYNPVYIYRYFQRRNSDS) are extracellular. A helical membrane pass occupies residues 290–310 (WASLGGIMLSITGTEALFADL). The Cytoplasmic segment spans residues 311-315 (CHFPV). The helical transmembrane segment at 316–338 (FAIQIAFTLIVFPCLLLAYTGQA) threads the bilayer. The Extracellular segment spans residues 339 to 359 (AYIIAHKDHVADAFYRSIPDS). A helical membrane pass occupies residues 360–380 (IYWPAFVIATAAAIVASQATI). Over 381 to 411 (SATYSIIKQALALGCFPRVKIVHTSKKFLGQ) the chain is Cytoplasmic. The helical transmembrane segment at 412–432 (IYIPDINWVLLILCIAVTAGF) threads the bilayer. The Extracellular portion of the chain corresponds to 433 to 444 (KNQSQIGNAYGT). Asparagine 434 carries an N-linked (GlcNAc...) asparagine glycan. Residues 445–465 (AVVIVMLVTTFLMVPIMLLVW) traverse the membrane as a helical segment. The Cytoplasmic portion of the chain corresponds to 466-468 (KSH). The chain crosses the membrane as a helical span at residues 469–489 (WILVVTFIVLSLMVEIPYFSA). Topologically, residues 490–496 (CLLKIDQ) are extracellular. The helical transmembrane segment at 497 to 517 (GGWVPLVIATAFFIIMYVWHF) threads the bilayer. Residues 518–791 (CTVKRYEFEM…LLNVGQIYYI (274 aa)) are Cytoplasmic-facing.

Belongs to the HAK/KUP transporter (TC 2.A.72.3) family.

The protein localises to the membrane. In terms of biological role, high-affinity potassium transporter. The sequence is that of Probable potassium transporter 11 from Oryza sativa subsp. japonica (Rice).